The primary structure comprises 404 residues: Nicotinate phosphoribosyltransferase (404 aa).

Residue His224 is modified to Phosphohistidine; by autocatalysis.

Belongs to the NAPRTase family. Post-translationally, transiently phosphorylated on a His residue during the reaction cycle. Phosphorylation strongly increases the affinity for substrates and increases the rate of nicotinate D-ribonucleotide production. Dephosphorylation regenerates the low-affinity form of the enzyme, leading to product release.

The catalysed reaction is nicotinate + 5-phospho-alpha-D-ribose 1-diphosphate + ATP + H2O = nicotinate beta-D-ribonucleotide + ADP + phosphate + diphosphate. Its pathway is cofactor biosynthesis; NAD(+) biosynthesis; nicotinate D-ribonucleotide from nicotinate: step 1/1. Catalyzes the synthesis of beta-nicotinate D-ribonucleotide from nicotinate and 5-phospho-D-ribose 1-phosphate at the expense of ATP. This Photorhabdus laumondii subsp. laumondii (strain DSM 15139 / CIP 105565 / TT01) (Photorhabdus luminescens subsp. laumondii) protein is Nicotinate phosphoribosyltransferase.